The primary structure comprises 723 residues: MQSAINLNIGGLLQNTGLLRNSRNGINRKPLDIEATAASLSRVYHQVWRQFSSDTSSPVTINQMNNILRDSTLSRRIARKSEISLNYDDAVVRIIPASSSFYIQRRGFRTRKQTFGVGNAGKPTQDEVKSPLTYFSELLAGKKQKTSEGGVEKWNQYESDLKKLPENQQRTYTDGFVKGLLSNGVSGAGKDGKKSNTLTRFYIFLVFCIFFGYLTGRIRVRVGDRQIGSLFFSNPQEVNPEDVQVTFDDVRGMDEAKLEVEEIVDYLKDPEKYSRLGGRLPKGVLLVGPPGTGKTLLARAIAGEAQVPFFHTAGSEFDEVLVGQGARRVRDLFDKAKARAPCIIFIDEIDSVGSKRVSNSIHPYANQTINQLLSEMDGFTRNEGIIVIAATNRVDDLDKALLRPGRFDVRVTVPKPDLAGRVDIFNFYLSKIVHSGGIDPKVLAKGSTGFTGADIENMVNQAALKAATDNAVEVTMAYLDEARDRVLMGPARTGGRIPDEEANRNTAYHEAGHTLVSLYTKDATPLHKVTIIPRGQSLGHTAMLPEKDSYQLTKAQMLATLDVMMGGRVAEELIFGDDKVTTGAADDLSKATQLAVQMVKVFGMSDKVGLRDFTAQDNESALVKVSDLAPQTAELIDAEINRVLQESYKRAKVILETKKKEHQLLAEALLEYETLSADEVKRVISGQKIKRPTPAAVKKSNETKRNQPSLVLHLFEEEGRGKQ.

The chain crosses the membrane as a helical span at residues 198 to 220 (LTRFYIFLVFCIFFGYLTGRIRV). 288–295 (GPPGTGKT) contributes to the ATP binding site. His-509 lines the Zn(2+) pocket. The active site involves Glu-510. Zn(2+) contacts are provided by His-513 and Asp-587.

It in the N-terminal section; belongs to the AAA ATPase family. In the C-terminal section; belongs to the peptidase M41 family. Zn(2+) serves as cofactor.

It localises to the mitochondrion inner membrane. Its subcellular location is the mitochondrion. In terms of biological role, ATP-dependent metalloprotease that catalyzes the degradation of folded and unfolded proteins with a suitable degron sequence in the mitochondrial intermembrane region. Plays an important role in regulating mitochondrial morphology and function. The sequence is that of ATP-dependent zinc metalloprotease YME1 homolog (ymel-1) from Caenorhabditis elegans.